Here is a 323-residue protein sequence, read N- to C-terminus: Methenyltetrahydromethanopterin cyclohydrolase (323 aa).

Belongs to the MCH family.

Its subcellular location is the cytoplasm. The enzyme catalyses 5,10-methenyl-5,6,7,8-tetrahydromethanopterin + H2O = N(5)-formyl-5,6,7,8-tetrahydromethanopterin + H(+). It participates in one-carbon metabolism; methanogenesis from CO(2); 5,10-methenyl-5,6,7,8-tetrahydromethanopterin from CO(2): step 3/3. Its function is as follows. Catalyzes the reversible interconversion of 5-formyl-H(4)MPT to methenyl-H(4)MPT(+). The chain is Methenyltetrahydromethanopterin cyclohydrolase from Methanococcus maripaludis (strain C7 / ATCC BAA-1331).